The chain runs to 207 residues: Cytochrome c biogenesis ATP-binding export protein CcmA (207 aa).

The region spanning 3–206 is the ABC transporter domain; the sequence is LMAEGLSARR…AKSLEMTGFV (204 aa). Position 35–42 (35–42) interacts with ATP; sequence GPNGAGKS.

This sequence belongs to the ABC transporter superfamily. CcmA exporter (TC 3.A.1.107) family. As to quaternary structure, the complex is composed of two ATP-binding proteins (CcmA) and two transmembrane proteins (CcmB).

It localises to the cell inner membrane. It catalyses the reaction heme b(in) + ATP + H2O = heme b(out) + ADP + phosphate + H(+). Functionally, part of the ABC transporter complex CcmAB involved in the biogenesis of c-type cytochromes; once thought to export heme, this seems not to be the case, but its exact role is uncertain. Responsible for energy coupling to the transport system. The sequence is that of Cytochrome c biogenesis ATP-binding export protein CcmA from Rhizobium meliloti (strain 1021) (Ensifer meliloti).